Reading from the N-terminus, the 184-residue chain is Dynactin subunit 6 (184 aa).

Belongs to the dynactin subunits 5/6 family. Dynactin subunit 6 subfamily. In terms of assembly, subunit of dynactin, a multiprotein complex part of a tripartite complex with dynein and a adapter, such as BICDL1, BICD2 or HOOK3. The dynactin complex is built around ACTR1A/ACTB filament and consists of an actin-related filament composed of a shoulder domain, a pointed end and a barbed end.

The protein resides in the cytoplasm. The protein localises to the cytoskeleton. Its function is as follows. Part of the dynactin complex that activates the molecular motor dynein for ultra-processive transport along microtubules. This chain is Dynactin subunit 6 (dctn6), found in Nematostella vectensis (Starlet sea anemone).